A 122-amino-acid polypeptide reads, in one-letter code: MNKKDTCEIFCYDEEKVNRIQGDLKTIDIVSVAQMLKAIADENRAKITYALCQDEELCVCDIANIIGITVANASHHLRTLHKQGIVRYRKEGKLAFYSLDDEHIRQIMMIVLEHKKEVNVNV.

Cd(2+) is bound by residues Cys7, Cys11, Cys58, and Cys60. The 96-residue stretch at 24-119 (LKTIDIVSVA…IVLEHKKEVN (96 aa)) folds into the HTH arsR-type domain. Residues 59-78 (VCDIANIIGITVANASHHLR) constitute a DNA-binding region (H-T-H motif).

Homodimer.

In terms of biological role, metal-binding repressor for the cad operon. Involved in resistance to heavy metals, such as cadmium, bismuth, zinc or lead. Metal binding causes the repressor to dissociate from the DNA. The chain is Cadmium resistance transcriptional regulatory protein CadC (cadC) from Alkalihalophilus pseudofirmus (strain ATCC BAA-2126 / JCM 17055 / OF4) (Bacillus pseudofirmus).